Reading from the N-terminus, the 211-residue chain is Glutathione S-transferase class-mu 28 kDa isozyme (211 aa).

The region spanning 4-86 (DHIKVIYFNG…YMAKKHHMMG (83 aa)) is the GST N-terminal domain. Glutathione is bound by residues Tyr-10, Arg-16, Trp-41, Lys-45, Leu-53, Glu-70, Ser-71, and Asp-104. The GST C-terminal domain maps to 88–211 (TEEEYYNVEK…YLSDRAATPF (124 aa)).

This sequence belongs to the GST superfamily. Mu family. In terms of assembly, homodimer.

It carries out the reaction RX + glutathione = an S-substituted glutathione + a halide anion + H(+). Its function is as follows. Conjugation of reduced glutathione to a wide number of exogenous and endogenous hydrophobic electrophiles. GST isoenzymes appear to play a central role in the parasite detoxification system. Other functions are also suspected including a role in increasing the solubility of haematin in the parasite gut. The protein is Glutathione S-transferase class-mu 28 kDa isozyme of Schistosoma haematobium (Blood fluke).